The chain runs to 238 residues: Purine nucleoside phosphorylase DeoD-type (238 aa).

His-5 is an a purine D-ribonucleoside binding site. Phosphate-binding positions include Gly-21, Arg-25, Arg-44, and 88 to 91 (RVGS). Residues 180-182 (EME) and 204-205 (SD) contribute to the a purine D-ribonucleoside site. The active-site Proton donor is Asp-205.

It belongs to the PNP/UDP phosphorylase family. In terms of assembly, homohexamer; trimer of homodimers.

It catalyses the reaction a purine D-ribonucleoside + phosphate = a purine nucleobase + alpha-D-ribose 1-phosphate. The catalysed reaction is a purine 2'-deoxy-D-ribonucleoside + phosphate = a purine nucleobase + 2-deoxy-alpha-D-ribose 1-phosphate. Functionally, catalyzes the reversible phosphorolytic breakdown of the N-glycosidic bond in the beta-(deoxy)ribonucleoside molecules, with the formation of the corresponding free purine bases and pentose-1-phosphate. The chain is Purine nucleoside phosphorylase DeoD-type from Photorhabdus laumondii subsp. laumondii (strain DSM 15139 / CIP 105565 / TT01) (Photorhabdus luminescens subsp. laumondii).